We begin with the raw amino-acid sequence, 575 residues long: DNA polymerase lambda (575 aa).

A BRCT domain is found at 36–132; sequence EAEEWLSSLR…RLVDVAGFSI (97 aa). The interval 160–205 is disordered; the sequence is ALLQTALPPPPSPTRPVSPPQKTKEAPNTQAQPISDDEASDGEETQ. A compositionally biased stretch (pro residues) spans 166-178; sequence LPPPPSPTRPVSP. The segment covering 194-203 has biased composition (acidic residues); the sequence is SDDEASDGEE. The segment at 265–279 is DNA-binding; it reads KAYSVQGDKWRALGY. K312 (schiff-base intermediate with DNA) is an active-site residue. A DNA-binding region spans residues 345–348; it reads GTKT. Residues R386, 417–420, and 426–429 each bind dCTP; these read SYRR and GDVD. The segment at 420–429 is involved in primer binding; the sequence is RGKATCGDVD. D427, D429, and D490 together coordinate Mn(2+). Residues 466-505 are DNA-binding; that stretch reads ENGQQQKYLGVCRLPGPGWRHRRLDIIVVPYSEFACALLY. Residue N513 coordinates dCTP.

Belongs to the DNA polymerase type-X family. Interacts with PCNA. Interacts with PAXX; promoting POLL recruitment to double-strand breaks (DSBs) and stimulation of the end-filling activity of POLL. Interacts with XRCC4; promoting POLL recruitment to double-strand breaks (DSBs) and stimulation of the end-filling activity of POLL. Interacts with NHEJ1/XLF; promoting POLL recruitment to double-strand breaks (DSBs) and stimulation of the end-filling activity of POLL. Requires Mn(2+) as cofactor.

It is found in the nucleus. It carries out the reaction DNA(n) + a 2'-deoxyribonucleoside 5'-triphosphate = DNA(n+1) + diphosphate. In terms of biological role, DNA polymerase that functions in several pathways of DNA repair. Involved in base excision repair (BER) responsible for repair of lesions that give rise to abasic (AP) sites in DNA. Also contributes to DNA double-strand break repair by non-homologous end joining and homologous recombination. Has both template-dependent and template-independent (terminal transferase) DNA polymerase activities. Also has a 5'-deoxyribose-5-phosphate lyase (dRP lyase) activity. This is DNA polymerase lambda from Macaca fascicularis (Crab-eating macaque).